The primary structure comprises 355 residues: MSQRKIIHVDMDAFYASVEQRDRPGLRGRPVVVGGDPNGRGVVAAASYEARRHGIHSAMPAWRAARLCPDAVFLRPRFDVYRSISAQIQALFREYTPLVEPLSLDEAYLDVSDCPRRGGSATLIAREIRARIHEQTGLTASAGVSCNKFLAKIASDLDKPDGLHVIPPEQAEAFVAALPVGKIHGVGQATRQRMERMGVRTGADLRRLTLLELQRAFGSRARFYYELARGRDERPVRPRRERKSVGAETTFGEDLNNPAEMLERMAPLADKVAASLHRRGLAGRTVTLKVKYHDFRQITRSLSGRPVQSADEIRARLPALLQDTEAGDRPVRLLGVTVSGLVTVTPDQARQLALF.

One can recognise a UmuC domain in the interval 6–187 (IIHVDMDAFY…LPVGKIHGVG (182 aa)). Mg(2+)-binding residues include aspartate 10 and aspartate 105. Residue glutamate 106 is part of the active site.

It belongs to the DNA polymerase type-Y family. In terms of assembly, monomer. Mg(2+) is required as a cofactor.

The protein resides in the cytoplasm. It catalyses the reaction DNA(n) + a 2'-deoxyribonucleoside 5'-triphosphate = DNA(n+1) + diphosphate. Poorly processive, error-prone DNA polymerase involved in untargeted mutagenesis. Copies undamaged DNA at stalled replication forks, which arise in vivo from mismatched or misaligned primer ends. These misaligned primers can be extended by PolIV. Exhibits no 3'-5' exonuclease (proofreading) activity. May be involved in translesional synthesis, in conjunction with the beta clamp from PolIII. This chain is DNA polymerase IV, found in Alkalilimnicola ehrlichii (strain ATCC BAA-1101 / DSM 17681 / MLHE-1).